The sequence spans 511 residues: Membrane-bound lytic murein transglycosylase F (511 aa).

The N-terminal stretch at 1-19 is a signal peptide; sequence MKKLKINYLLIGIVTLLLA. Residues 20-269 are non-LT domain; that stretch reads AALWPSIPWS…RLEEKYLGHG (250 aa). The interval 270 to 511 is LT domain; that stretch reads NDFDYVDTRT…ARMKLPGHLY (242 aa). E314 is a catalytic residue.

In the N-terminal section; belongs to the bacterial solute-binding protein 3 family. The protein in the C-terminal section; belongs to the transglycosylase Slt family.

Its subcellular location is the cell outer membrane. It catalyses the reaction Exolytic cleavage of the (1-&gt;4)-beta-glycosidic linkage between N-acetylmuramic acid (MurNAc) and N-acetylglucosamine (GlcNAc) residues in peptidoglycan, from either the reducing or the non-reducing ends of the peptidoglycan chains, with concomitant formation of a 1,6-anhydrobond in the MurNAc residue.. Functionally, murein-degrading enzyme that degrades murein glycan strands and insoluble, high-molecular weight murein sacculi, with the concomitant formation of a 1,6-anhydromuramoyl product. Lytic transglycosylases (LTs) play an integral role in the metabolism of the peptidoglycan (PG) sacculus. Their lytic action creates space within the PG sacculus to allow for its expansion as well as for the insertion of various structures such as secretion systems and flagella. The polypeptide is Membrane-bound lytic murein transglycosylase F (Klebsiella pneumoniae subsp. pneumoniae (strain ATCC 700721 / MGH 78578)).